The sequence spans 870 residues: Protein csx2 (870 aa).

The segment at 212–251 (TSPEISDAPPLSGNVDPLPINSPPLTNPVARDIDQTEPED) is disordered. The PH domain maps to 510–614 (TSAKQGLLLA…WIEAIQYSIS (105 aa)). Phosphoserine is present on residues Ser625, Ser653, and Ser655. A disordered region spans residues 647 to 672 (RVASVTSPSRHNSDSKEKKQTKSPSL). Over residues 657 to 666 (HNSDSKEKKQ) the composition is skewed to basic and acidic residues. One can recognise an Arf-GAP domain in the interval 670 to 791 (PSLVKTLKEM…RFIKSSFSHD (122 aa)). The C4-type zinc-finger motif lies at 686 to 710 (CADCNTTARVEWCAINFPVVLCIDC).

This chain is Protein csx2 (csx2), found in Schizosaccharomyces pombe (strain 972 / ATCC 24843) (Fission yeast).